A 189-amino-acid polypeptide reads, in one-letter code: GTP cyclohydrolase 1 (189 aa).

The Zn(2+) site is built by cysteine 78, histidine 81, and cysteine 150.

It belongs to the GTP cyclohydrolase I family. Toroid-shaped homodecamer, composed of two pentamers of five dimers.

It catalyses the reaction GTP + H2O = 7,8-dihydroneopterin 3'-triphosphate + formate + H(+). It functions in the pathway cofactor biosynthesis; 7,8-dihydroneopterin triphosphate biosynthesis; 7,8-dihydroneopterin triphosphate from GTP: step 1/1. This is GTP cyclohydrolase 1 from Listeria welshimeri serovar 6b (strain ATCC 35897 / DSM 20650 / CCUG 15529 / CIP 8149 / NCTC 11857 / SLCC 5334 / V8).